Here is a 369-residue protein sequence, read N- to C-terminus: D-alanine--D-alanine ligase (369 aa).

The ATP-grasp domain occupies Lys-152–Glu-359. Arg-180 to Glu-235 contacts ATP. Asp-314, Glu-326, and Asn-328 together coordinate Mg(2+).

Belongs to the D-alanine--D-alanine ligase family. Mg(2+) serves as cofactor. Requires Mn(2+) as cofactor.

Its subcellular location is the cytoplasm. The catalysed reaction is 2 D-alanine + ATP = D-alanyl-D-alanine + ADP + phosphate + H(+). The protein operates within cell wall biogenesis; peptidoglycan biosynthesis. Its function is as follows. Cell wall formation. The protein is D-alanine--D-alanine ligase of Mycobacterium avium (strain 104).